The primary structure comprises 851 residues: ESF1 homolog (851 aa).

At serine 2 the chain carries N-acetylserine. 3 disordered regions span residues 74–134, 148–328, and 542–576; these read LSDS…LDNS, IDSN…EESG, and SSSEDEEEIEEELQGDDGVNVEEDGKTKKSQKDDE. Phosphoserine occurs at positions 75, 77, 79, and 82. Positions 90 to 100 are enriched in basic residues; it reads SQKKIKKKKTQ. The span at 101–131 shows a compositional bias: basic and acidic residues; it reads TKKEIDSKNLVEKKKETKKANHKGSENKTDL. Phosphoserine occurs at positions 134 and 153. Positions 154–165 are enriched in basic and acidic residues; that stretch reads PKKDSKEFTQKN. Phosphoserine occurs at positions 179, 180, and 198. Residues 197 to 210 show a composition bias toward basic and acidic residues; the sequence is KSPRIECSKTRREM. Acidic residues-rich tracts occupy residues 238–257 and 268–295; these read ALEEDSESVSEIGSDEESEN and DDDGSEDDEEEDEDEEEDEDEDSEDDDK. A phosphoserine mark is found at serine 296 and serine 298. At threonine 311 the chain carries Phosphothreonine. A phosphoserine mark is found at serine 312 and serine 313. Acidic residues-rich tracts occupy residues 312–324 and 544–563; these read SSEDEDDTADLFP and SEDEEEIEEELQGDDGVNVE. Residues 564-573 are compositionally biased toward basic and acidic residues; that stretch reads EDGKTKKSQK. At serine 614 the chain carries Phosphoserine. Residues 640–650 show a composition bias toward basic residues; it reads KEKKRLKRKQK. Residues 640–667 form a disordered region; it reads KEKKRLKRKQKALAEEASEEELPSDVDL. The segment covering 655 to 667 has biased composition (acidic residues); the sequence is EASEEELPSDVDL. Serine 657 and serine 663 each carry phosphoserine. A Phosphothreonine modification is found at threonine 693. Phosphoserine occurs at positions 694, 735, and 823. Positions 730–824 form a coiled coil; the sequence is EHQNLSKKKK…IEKESQRKSI (95 aa). The segment covering 794-824 has biased composition (basic and acidic residues); the sequence is ARQRERKEQELTQAIKKKESEIEKESQRKSI. The segment at 794–827 is disordered; the sequence is ARQRERKEQELTQAIKKKESEIEKESQRKSIDPA.

This sequence belongs to the ESF1 family. As to quaternary structure, interacts with ABT1. Forms a complex with ABT1 and suppresses the ABT1-induced activation of polymerase II-directed transcription in mammalian cells.

It localises to the nucleus. The protein localises to the nucleolus. It is found in the nucleoplasm. Functionally, may constitute a novel regulatory system for basal transcription. Negatively regulates ABT1. In Homo sapiens (Human), this protein is ESF1 homolog (ESF1).